Reading from the N-terminus, the 452-residue chain is UDP-N-acetylmuramate--L-alanine ligase (452 aa).

Residue 119–125 coordinates ATP; that stretch reads GAHGKTS.

This sequence belongs to the MurCDEF family.

It localises to the cytoplasm. The enzyme catalyses UDP-N-acetyl-alpha-D-muramate + L-alanine + ATP = UDP-N-acetyl-alpha-D-muramoyl-L-alanine + ADP + phosphate + H(+). It functions in the pathway cell wall biogenesis; peptidoglycan biosynthesis. Functionally, cell wall formation. The protein is UDP-N-acetylmuramate--L-alanine ligase of Streptococcus mutans serotype c (strain ATCC 700610 / UA159).